The sequence spans 485 residues: MNNQDQSLIFEVSKEGRVGYSLPELDVPETDVTDVIDEAYIRDEPADLPEVSELDIMRHYTALSRRNHGVDSGFYPLGSCTMKYNPKINEKIARIPGFSAIHPLQDEATVQGALELLYDLSEHLEEITGMDEVTLQPAAGAHGEWTGLMMIRAFHEANGDHKRTKVIVPDSAHGTNPASATVAGFETVTVKSNDDGLVDLEDLKRVVDEETAALMLTNPNTLGLFEENILEMAEIVHSAGGKLYYDGANLNAVLSKARPGDMGFDVVHLNLHKTFTGPHGGGGPGSGPVGVKKELIPYLPKPVLVKKDGRYTFDHDRPHSIGRVKPYYGNFGINVRAYTYIRSMGPDGLKEVTENAVLNANYMMRKLAPYYDLPFDRHSKHEFVLSGRRQKKLGVRTLDIAKRLLDFGFHPPTIYFPLNVEECIMIEPTETESKETLDAFIDTMIQIAKEAEETPEVVQEAPHTTVVKRMDETKAARKPVLRYEK.

At K273 the chain carries N6-(pyridoxal phosphate)lysine.

The protein belongs to the GcvP family. C-terminal subunit subfamily. As to quaternary structure, the glycine cleavage system is composed of four proteins: P, T, L and H. In this organism, the P 'protein' is a heterodimer of two subunits. Pyridoxal 5'-phosphate is required as a cofactor.

The catalysed reaction is N(6)-[(R)-lipoyl]-L-lysyl-[glycine-cleavage complex H protein] + glycine + H(+) = N(6)-[(R)-S(8)-aminomethyldihydrolipoyl]-L-lysyl-[glycine-cleavage complex H protein] + CO2. The glycine cleavage system catalyzes the degradation of glycine. The P protein binds the alpha-amino group of glycine through its pyridoxal phosphate cofactor; CO(2) is released and the remaining methylamine moiety is then transferred to the lipoamide cofactor of the H protein. This Bacillus licheniformis (strain ATCC 14580 / DSM 13 / JCM 2505 / CCUG 7422 / NBRC 12200 / NCIMB 9375 / NCTC 10341 / NRRL NRS-1264 / Gibson 46) protein is Probable glycine dehydrogenase (decarboxylating) subunit 2.